We begin with the raw amino-acid sequence, 225 residues long: 7-cyano-7-deazaguanine synthase (225 aa).

10 to 20 is an ATP binding site; the sequence is VSGGLDSTTVI. Zn(2+) is bound by residues Cys189, Cys199, Cys202, and Cys205.

It belongs to the QueC family. Zn(2+) serves as cofactor.

It carries out the reaction 7-carboxy-7-deazaguanine + NH4(+) + ATP = 7-cyano-7-deazaguanine + ADP + phosphate + H2O + H(+). The protein operates within purine metabolism; 7-cyano-7-deazaguanine biosynthesis. Its function is as follows. Catalyzes the ATP-dependent conversion of 7-carboxy-7-deazaguanine (CDG) to 7-cyano-7-deazaguanine (preQ(0)). The chain is 7-cyano-7-deazaguanine synthase from Cellvibrio japonicus (strain Ueda107) (Pseudomonas fluorescens subsp. cellulosa).